Reading from the N-terminus, the 217-residue chain is 3,4-dihydroxy-2-butanone 4-phosphate synthase (217 aa).

Residues 37–38 (RE), aspartate 42, 150–154 (RGGHT), and glutamate 174 contribute to the D-ribulose 5-phosphate site. Mg(2+) is bound at residue glutamate 38. Histidine 153 serves as a coordination point for Mg(2+).

The protein belongs to the DHBP synthase family. In terms of assembly, homodimer. Mg(2+) serves as cofactor. Requires Mn(2+) as cofactor.

It carries out the reaction D-ribulose 5-phosphate = (2S)-2-hydroxy-3-oxobutyl phosphate + formate + H(+). Its pathway is cofactor biosynthesis; riboflavin biosynthesis; 2-hydroxy-3-oxobutyl phosphate from D-ribulose 5-phosphate: step 1/1. Functionally, catalyzes the conversion of D-ribulose 5-phosphate to formate and 3,4-dihydroxy-2-butanone 4-phosphate. The chain is 3,4-dihydroxy-2-butanone 4-phosphate synthase from Salmonella paratyphi A (strain ATCC 9150 / SARB42).